The following is a 241-amino-acid chain: Probable pectate lyase D (241 aa).

Residues 1–17 (MYQKSLLFSLLATSALA) form the signal peptide. Asparagine 215 is a glycosylation site (N-linked (GlcNAc...) asparagine). Positions 215–241 (NNSGDEPEEVSEGPSDACQYSEPLSSC) are disordered.

The protein belongs to the polysaccharide lyase 3 family. Ca(2+) serves as cofactor.

It localises to the secreted. The enzyme catalyses Eliminative cleavage of (1-&gt;4)-alpha-D-galacturonan to give oligosaccharides with 4-deoxy-alpha-D-galact-4-enuronosyl groups at their non-reducing ends.. Pectinolytic enzyme consist of four classes of enzymes: pectin lyase, polygalacturonase, pectin methylesterase and rhamnogalacturonase. Among pectinolytic enzymes, pectin lyase is the most important in depolymerization of pectin, since it cleaves internal glycosidic bonds of highly methylated pectins. Favors pectate, the anion, over pectin, the methyl ester. The sequence is that of Probable pectate lyase D (plyD) from Neosartorya fischeri (strain ATCC 1020 / DSM 3700 / CBS 544.65 / FGSC A1164 / JCM 1740 / NRRL 181 / WB 181) (Aspergillus fischerianus).